Reading from the N-terminus, the 118-residue chain is Large ribosomal subunit protein bL20 (118 aa).

Belongs to the bacterial ribosomal protein bL20 family.

Its function is as follows. Binds directly to 23S ribosomal RNA and is necessary for the in vitro assembly process of the 50S ribosomal subunit. It is not involved in the protein synthesizing functions of that subunit. The sequence is that of Large ribosomal subunit protein bL20 from Leptothrix cholodnii (strain ATCC 51168 / LMG 8142 / SP-6) (Leptothrix discophora (strain SP-6)).